The chain runs to 535 residues: Suppressor of cytokine signaling 6 (535 aa).

A compositionally biased stretch (basic residues) spans 80-89; sequence RLSAKQKSKG. A disordered region spans residues 80 to 105; that stretch reads RLSAKQKSKGKAGTPSGSSADEDTFS. The region spanning 384–491 is the SH2 domain; sequence WYWGPITRWE…TYPVRLTNPV (108 aa). An SOCS box domain is found at 486–535; it reads RLTNPVSRFMQVRSLQYLCRFVIRQYTRIDLIQKLPLPNKMKDYLQEKHY.

In terms of assembly, interacts with RBCK1. Interacts with phosphorylated IRS4. Interacts with PIM3. Interacts with KIT (phosphorylated).

It functions in the pathway protein modification; protein ubiquitination. Functionally, SOCS family proteins form part of a classical negative feedback system that regulates cytokine signal transduction. May be a substrate recognition component of a SCF-like ECS (Elongin BC-CUL2/5-SOCS-box protein) E3 ubiquitin-protein ligase complex which mediates the ubiquitination and subsequent proteasomal degradation of target proteins. Regulates KIT degradation by ubiquitination of the tyrosine-phosphorylated receptor. In Homo sapiens (Human), this protein is Suppressor of cytokine signaling 6 (SOCS6).